The chain runs to 373 residues: Citrate synthase (373 aa).

Active-site residues include H262 and D314.

Belongs to the citrate synthase family. Homohexamer.

It carries out the reaction oxaloacetate + acetyl-CoA + H2O = citrate + CoA + H(+). Its pathway is carbohydrate metabolism; tricarboxylic acid cycle; isocitrate from oxaloacetate: step 1/2. In Heyndrickxia coagulans (Weizmannia coagulans), this protein is Citrate synthase (ctsA).